Reading from the N-terminus, the 178-residue chain is 2-C-methyl-D-erythritol 2,4-cyclodiphosphate synthase (178 aa).

Residues Asp-24, His-26, and His-61 each coordinate a divalent metal cation. Position 24–26 (24–26 (DSH)) interacts with 4-CDP-2-C-methyl-D-erythritol 2-phosphate. 150–153 (TSGE) serves as a coordination point for 4-CDP-2-C-methyl-D-erythritol 2-phosphate.

This sequence belongs to the IspF family. In terms of assembly, homotrimer. A divalent metal cation is required as a cofactor.

The catalysed reaction is 4-CDP-2-C-methyl-D-erythritol 2-phosphate = 2-C-methyl-D-erythritol 2,4-cyclic diphosphate + CMP. It participates in isoprenoid biosynthesis; isopentenyl diphosphate biosynthesis via DXP pathway; isopentenyl diphosphate from 1-deoxy-D-xylulose 5-phosphate: step 4/6. In terms of biological role, involved in the biosynthesis of isopentenyl diphosphate (IPP) and dimethylallyl diphosphate (DMAPP), two major building blocks of isoprenoid compounds. Catalyzes the conversion of 4-diphosphocytidyl-2-C-methyl-D-erythritol 2-phosphate (CDP-ME2P) to 2-C-methyl-D-erythritol 2,4-cyclodiphosphate (ME-CPP) with a corresponding release of cytidine 5-monophosphate (CMP). This Chlamydia trachomatis serovar L2 (strain ATCC VR-902B / DSM 19102 / 434/Bu) protein is 2-C-methyl-D-erythritol 2,4-cyclodiphosphate synthase.